Reading from the N-terminus, the 589-residue chain is Probable peptidoglycan D,D-transpeptidase FtsI (589 aa).

Residues 47 to 67 (IFLVMGFFGFCFVGVSLGAGW) form a helical membrane-spanning segment. Catalysis depends on Ser-296, which acts as the Acyl-ester intermediate.

This sequence belongs to the transpeptidase family. As to quaternary structure, interacts with FtsN and FtsW.

The protein resides in the cell inner membrane. The catalysed reaction is Preferential cleavage: (Ac)2-L-Lys-D-Ala-|-D-Ala. Also transpeptidation of peptidyl-alanyl moieties that are N-acyl substituents of D-alanine.. Its pathway is cell wall biogenesis; peptidoglycan biosynthesis. Its function is as follows. Catalyzes cross-linking of the peptidoglycan cell wall at the division septum. The protein is Probable peptidoglycan D,D-transpeptidase FtsI (ftsI) of Caulobacter vibrioides (strain NA1000 / CB15N) (Caulobacter crescentus).